A 488-amino-acid chain; its full sequence is Inosine-5'-monophosphate dehydrogenase (488 aa).

2 consecutive CBS domains span residues 95-153 and 157-216; these read VISN…SIKI and MTQE…AKDE. NAD(+)-binding positions include aspartate 250 and 300-302; that span reads GIG. Positions 302 and 304 each coordinate K(+). Position 305 (serine 305) interacts with IMP. A K(+)-binding site is contributed by cysteine 307. The active-site Thioimidate intermediate is cysteine 307. IMP is bound by residues 340-342, 363-364, and 387-391; these read DGG, GS, and YRGMG. Arginine 403 functions as the Proton acceptor in the catalytic mechanism. IMP is bound at residue glutamate 417. The disordered stretch occupies residues 468–488; that stretch reads GLAESHPHNIQITKESPNYSF. K(+) contacts are provided by glutamate 471, serine 472, and histidine 473. Residues 475-488 are compositionally biased toward polar residues; it reads HNIQITKESPNYSF.

This sequence belongs to the IMPDH/GMPR family. Homotetramer. It depends on K(+) as a cofactor.

It carries out the reaction IMP + NAD(+) + H2O = XMP + NADH + H(+). Its pathway is purine metabolism; XMP biosynthesis via de novo pathway; XMP from IMP: step 1/1. Its activity is regulated as follows. Mycophenolic acid (MPA) is a non-competitive inhibitor that prevents formation of the closed enzyme conformation by binding to the same site as the amobile flap. In contrast, mizoribine monophosphate (MZP) is a competitive inhibitor that induces the closed conformation. MPA is a potent inhibitor of mammalian IMPDHs but a poor inhibitor of the bacterial enzymes. MZP is a more potent inhibitor of bacterial IMPDH. Functionally, catalyzes the conversion of inosine 5'-phosphate (IMP) to xanthosine 5'-phosphate (XMP), the first committed and rate-limiting step in the de novo synthesis of guanine nucleotides, and therefore plays an important role in the regulation of cell growth. The protein is Inosine-5'-monophosphate dehydrogenase of Staphylococcus aureus (strain MW2).